The chain runs to 3032 residues: Biorientation of chromosomes in cell division protein 1-like 1 (3032 aa).

The segment covering 1 to 31 has biased composition (pro residues); the sequence is MATNPQPQPPPPAPPPPPPQPQPPPPPPGPG. Disordered regions lie at residues 1 to 48, 164 to 195, 214 to 397, and 409 to 465; these read MATN…GAGD, EEAA…SANV, NAAR…LDSD, and VHTS…RGVR. Residues 32–46 show a composition bias toward gly residues; the sequence is AGPGASGPGSAGAGA. Residues 234–243 show a composition bias toward polar residues; that stretch reads KLSSQPSTDV. The segment covering 244 to 261 has biased composition (basic and acidic residues); it reads STDKERGSEDATEREKAT. S264 is subject to Phosphoserine. A compositionally biased stretch (basic and acidic residues) spans 310–391; the sequence is TDPKIKSMDK…RAAEGTKEDC (82 aa). Residues 416–441 are compositionally biased toward acidic residues; sequence SFEEDTEEEVVVSESMEEGEITSEDE. An N6-acetyllysine modification is found at K471. S480 and S482 each carry phosphoserine. Disordered stretches follow at residues 480–1153, 1165–1296, 1309–1366, 1424–1491, 1675–1701, 1740–1858, and 1934–1978; these read SDSD…HKAT, MVDS…HNSN, GGRA…LSED, AAGE…SGRR, GSLS…TEGT, AKPQ…GHAS, and ALAG…ISTG. Basic and acidic residues-rich tracts occupy residues 488–503 and 510–525; these read VEQR…EERL and REKL…EKTK. An N6-acetyllysine modification is found at K534. Basic and acidic residues-rich tracts occupy residues 547–568 and 578–653; these read LEPK…EKKV and SRNV…EYKR. Phosphoserine is present on residues S632 and S656. T657 bears the Phosphothreonine mark. Composition is skewed to basic and acidic residues over residues 668–736, 743–768, and 799–846; these read TDTR…DKPS, GDSV…ESVR, and RDGK…KLQK. Over residues 848–859 the composition is skewed to polar residues; that stretch reads ALSSKQHSVTSQ. Composition is skewed to basic and acidic residues over residues 860–872, 934–960, 978–1015, and 1022–1069; these read KRSE…KCET, KPDK…RTSE, AQKD…DGHR, and SNKD…ENRR. S1071 carries the phosphoserine modification. Polar residues predominate over residues 1086–1096; it reads MSGTTSSSSLQ. A Phosphoserine modification is found at S1138. The segment covering 1272-1286 has biased composition (low complexity); sequence STDSDLLSSSGSVTV. Positions 1312-1329 are enriched in polar residues; sequence ASTSLANHSDVPNQYSTV. A phosphoserine mark is found at S1315 and S1364. Composition is skewed to basic and acidic residues over residues 1428–1470 and 1479–1491; these read HVVD…RRDS and GKME…SGRR. A phosphoserine mark is found at S1676 and S1685. Basic and acidic residues predominate over residues 1958 to 1970; that stretch reads HHSDSQLTRKETV. Residues S1989, S2001, S2092, and S2166 each carry the phosphoserine modification. Residues 2082–2101 are disordered; sequence PMPSAVSGENSQLTASRSEE. The segment covering 2088-2097 has biased composition (polar residues); it reads SGENSQLTAS. Disordered regions lie at residues 2303–2322, 2370–2469, 2536–2559, and 2575–2596; these read EENQ…LATK, EPSV…HCLT, EGGL…EKMG, and DVTL…PPKG. Residues S2417 and S2443 each carry the phosphoserine modification. The segment covering 2449 to 2459 has biased composition (basic and acidic residues); that stretch reads CLREPEQKPAE. S2554 carries the post-translational modification Phosphoserine. Position 2681 is a phosphoserine (S2681). The disordered stretch occupies residues 2682 to 3032; it reads TEALSGCSVE…DENPLKKAKR (351 aa). Acidic residues-rich tracts occupy residues 2692–2701 and 2715–2725; these read ADPEEVEEEE and SSEEELDDSPD. Residues 2727-2750 show a composition bias toward basic and acidic residues; the sequence is LDSRIETAQRQYSETEPHDTKEEN. Residues 2758–2769 are compositionally biased toward polar residues; the sequence is SSVTSKTNSSTG. Basic and acidic residues predominate over residues 2782-2804; that stretch reads TGEKTEPNEDDGSIKSQEDDHPI. The span at 2805-2815 shows a compositional bias: basic residues; sequence IIKRRRGRPRK. Positions 2807 to 2819 form a DNA-binding region, a.T hook; it reads KRRRGRPRKYPAE. The span at 2822 to 2832 shows a compositional bias: basic and acidic residues; sequence FKSKEDSKTET. A compositionally biased stretch (polar residues) spans 2833–2843; the sequence is DITTVEQSSPS. 2 positions are modified to phosphoserine: S2840 and S2841. A compositionally biased stretch (basic and acidic residues) spans 2853-2867; sequence ESNKEIANLEEKSTS. S2888 is modified (phosphoserine). T2890 is modified (phosphothreonine). A phosphoserine mark is found at S2892, S2898, and S2907. Glycyl lysine isopeptide (Lys-Gly) (interchain with G-Cter in ubiquitin) cross-links involve residues K2915 and K2916. Positions 2919-2932 are enriched in acidic residues; it reads ESDEEEEEEEEEEP. S2920 carries the post-translational modification Phosphoserine. A compositionally biased stretch (basic and acidic residues) spans 2975–2987; it reads LAKEKLSTSEKVS. S3000 carries the post-translational modification Phosphoserine. The span at 3020–3032 shows a compositional bias: basic and acidic residues; the sequence is QKVDENPLKKAKR.

It belongs to the BOD1 family. Interacts (via COMPASS-Shg1 domain) with SETD1A at stalled replication forks; this interaction mediates FANCD2-dependent nucleosome remodeling at reversed forks protecting them from nucleolytic degradation.

The protein localises to the chromosome. In terms of biological role, component of the fork protection machinery required to protect stalled/damaged replication forks from uncontrolled DNA2-dependent resection. Acts by stabilizing RAD51 at stalled replication forks and protecting RAD51 nucleofilaments from the antirecombinogenic activities of FBH1 and BLM. Does not regulate spindle orientation. This chain is Biorientation of chromosomes in cell division protein 1-like 1, found in Mus musculus (Mouse).